A 334-amino-acid polypeptide reads, in one-letter code: Ornithine carbamoyltransferase (334 aa).

Residues 56–59, glutamine 83, arginine 107, and 134–137 each bind carbamoyl phosphate; these read STRT and HPTQ. Residues asparagine 168, aspartate 232, and 236 to 237 contribute to the L-ornithine site; that span reads SM. Carbamoyl phosphate-binding positions include 274 to 275 and arginine 320; that span reads CL.

This sequence belongs to the aspartate/ornithine carbamoyltransferase superfamily. OTCase family.

Its subcellular location is the cytoplasm. It catalyses the reaction carbamoyl phosphate + L-ornithine = L-citrulline + phosphate + H(+). Its pathway is amino-acid biosynthesis; L-arginine biosynthesis; L-arginine from L-ornithine and carbamoyl phosphate: step 1/3. In terms of biological role, reversibly catalyzes the transfer of the carbamoyl group from carbamoyl phosphate (CP) to the N(epsilon) atom of ornithine (ORN) to produce L-citrulline. The polypeptide is Ornithine carbamoyltransferase (Escherichia coli O45:K1 (strain S88 / ExPEC)).